A 499-amino-acid chain; its full sequence is Glycerol kinase (499 aa).

Residue threonine 17 participates in ADP binding. The ATP site is built by threonine 17, threonine 18, and serine 19. A sn-glycerol 3-phosphate-binding site is contributed by threonine 17. Position 21 (arginine 21) interacts with ADP. Sn-glycerol 3-phosphate is bound by residues arginine 87, glutamate 88, tyrosine 139, and aspartate 243. Residues arginine 87, glutamate 88, tyrosine 139, aspartate 243, and glutamine 244 each coordinate glycerol. Threonine 265 and glycine 308 together coordinate ADP. Threonine 265, glycine 308, glutamine 312, and glycine 409 together coordinate ATP. ADP-binding residues include glycine 409 and asparagine 413.

The protein belongs to the FGGY kinase family.

The enzyme catalyses glycerol + ATP = sn-glycerol 3-phosphate + ADP + H(+). It functions in the pathway polyol metabolism; glycerol degradation via glycerol kinase pathway; sn-glycerol 3-phosphate from glycerol: step 1/1. With respect to regulation, inhibited by fructose 1,6-bisphosphate (FBP). Functionally, key enzyme in the regulation of glycerol uptake and metabolism. Catalyzes the phosphorylation of glycerol to yield sn-glycerol 3-phosphate. The sequence is that of Glycerol kinase from Pseudomonas putida (strain ATCC 700007 / DSM 6899 / JCM 31910 / BCRC 17059 / LMG 24140 / F1).